Consider the following 293-residue polypeptide: 4-hydroxybenzoate octaprenyltransferase (293 aa).

8 helical membrane passes run 19-39, 43-63, 95-115, 135-155, 158-178, 209-229, 231-251, and 266-286; these read PIGI…ASNG, WLIL…GCVV, LLAA…NALV, FFAI…PMSY, LWGE…FWAI, LTAI…VGAL, DFSG…VYHL, and FLHN…HFLL.

This sequence belongs to the UbiA prenyltransferase family. Mg(2+) serves as cofactor.

Its subcellular location is the cell inner membrane. It carries out the reaction all-trans-octaprenyl diphosphate + 4-hydroxybenzoate = 4-hydroxy-3-(all-trans-octaprenyl)benzoate + diphosphate. The protein operates within cofactor biosynthesis; ubiquinone biosynthesis. In terms of biological role, catalyzes the prenylation of para-hydroxybenzoate (PHB) with an all-trans polyprenyl group. Mediates the second step in the final reaction sequence of ubiquinone-8 (UQ-8) biosynthesis, which is the condensation of the polyisoprenoid side chain with PHB, generating the first membrane-bound Q intermediate 3-octaprenyl-4-hydroxybenzoate. In Thiobacillus denitrificans (strain ATCC 25259 / T1), this protein is 4-hydroxybenzoate octaprenyltransferase.